The primary structure comprises 287 residues: Large ribosomal subunit protein uL2 (287 aa).

The disordered stretch occupies residues 216–287 (RRPEVRGSVM…SKRGRGGRDA (72 aa)). Basic residues predominate over residues 271–287 (QRRRRKSSKRGRGGRDA).

The protein belongs to the universal ribosomal protein uL2 family. As to quaternary structure, part of the 50S ribosomal subunit. Forms a bridge to the 30S subunit in the 70S ribosome.

One of the primary rRNA binding proteins. Required for association of the 30S and 50S subunits to form the 70S ribosome, for tRNA binding and peptide bond formation. It has been suggested to have peptidyltransferase activity; this is somewhat controversial. Makes several contacts with the 16S rRNA in the 70S ribosome. The polypeptide is Large ribosomal subunit protein uL2 (Synechococcus sp. (strain ATCC 27144 / PCC 6301 / SAUG 1402/1) (Anacystis nidulans)).